A 98-amino-acid polypeptide reads, in one-letter code: ESAT-6-like protein EsxK (98 aa).

It belongs to the WXG100 family. CFP-10 subfamily. Strongly interacts with EsxL to form a heterodimeric complex under reducing conditions.

The protein localises to the secreted. The polypeptide is ESAT-6-like protein EsxK (Mycobacterium tuberculosis (strain CDC 1551 / Oshkosh)).